Consider the following 103-residue polypeptide: uncharacterized protein (103 aa).

This is an uncharacterized protein from Acanthamoeba polyphaga mimivirus (APMV).